Consider the following 381-residue polypeptide: Cobalt-precorrin-5B C(1)-methyltransferase (381 aa).

It belongs to the CbiD family.

The catalysed reaction is Co-precorrin-5B + S-adenosyl-L-methionine = Co-precorrin-6A + S-adenosyl-L-homocysteine. It participates in cofactor biosynthesis; adenosylcobalamin biosynthesis; cob(II)yrinate a,c-diamide from sirohydrochlorin (anaerobic route): step 6/10. Its function is as follows. Catalyzes the methylation of C-1 in cobalt-precorrin-5B to form cobalt-precorrin-6A. The sequence is that of Cobalt-precorrin-5B C(1)-methyltransferase from Prochlorococcus marinus (strain NATL2A).